The sequence spans 703 residues: Polyribonucleotide nucleotidyltransferase (703 aa).

The Mg(2+) site is built by Asp486 and Asp492. The KH domain occupies 554-613; the sequence is PKIITTNIDPEKIRDVIGPGGKMINKIIAETGVKIDIEEDGRVYILTPDSAAAQKALKII. Residues 623–691 form the S1 motif domain; the sequence is GEVYLGKVVR…KQGRINLSRK (69 aa).

Belongs to the polyribonucleotide nucleotidyltransferase family. Mg(2+) is required as a cofactor.

The protein resides in the cytoplasm. It catalyses the reaction RNA(n+1) + phosphate = RNA(n) + a ribonucleoside 5'-diphosphate. Involved in mRNA degradation. Catalyzes the phosphorolysis of single-stranded polyribonucleotides processively in the 3'- to 5'-direction. In Ruminiclostridium cellulolyticum (strain ATCC 35319 / DSM 5812 / JCM 6584 / H10) (Clostridium cellulolyticum), this protein is Polyribonucleotide nucleotidyltransferase.